We begin with the raw amino-acid sequence, 197 residues long: Probable GTP-binding protein EngB (197 aa).

An EngB-type G domain is found at 22–195; sequence ALPELALVGR…WQWIEERTGV (174 aa). GTP is bound by residues 30 to 37, 57 to 61, 75 to 78, 142 to 145, and 174 to 176; these read GRSNVGKS, GKTQT, DVPG, TKVD, and FSA. Residues Ser37 and Thr59 each contribute to the Mg(2+) site.

The protein belongs to the TRAFAC class TrmE-Era-EngA-EngB-Septin-like GTPase superfamily. EngB GTPase family. Mg(2+) serves as cofactor.

Functionally, necessary for normal cell division and for the maintenance of normal septation. The protein is Probable GTP-binding protein EngB of Limosilactobacillus fermentum (strain NBRC 3956 / LMG 18251) (Lactobacillus fermentum).